The primary structure comprises 352 residues: Mas-related G-protein coupled receptor member X2 (352 aa).

Topologically, residues 1–45 (MEERNISGRDLRVDSNITYWGTNITAVNESNHTGMSFCEVVSCTM) are extracellular. 5 N-linked (GlcNAc...) asparagine glycosylation sites follow: N5, N16, N23, N28, and N31. A helical transmembrane segment spans residues 46–66 (VFLSLIVALVGLVGNATVLWF). Topologically, residues 67-75 (LGFQMRRNA) are cytoplasmic. The chain crosses the membrane as a helical span at residues 76–96 (FSVYILNLAGADFLFICFQIG). Residues 97–107 (YCFHMILDIDS) are Extracellular-facing. A helical membrane pass occupies residues 108–128 (IPIEIDLFYLVVLNFPYFCGL). At 129 to 155 (SILSAISIERCLSVMWPIWYHCQRPRH) the chain is on the cytoplasmic side. Residues 156 to 176 (TSAVICTLLWVLSLVCSLLEG) form a helical membrane-spanning segment. At 177-195 (KECGFLYYTSDPGWCKTFD) the chain is on the extracellular side. The chain crosses the membrane as a helical span at residues 196 to 216 (LITATWLIVLFVALLGSSLAL). Topologically, residues 217–239 (VITIFWGLHKIPVTRLYVAIVFT) are cytoplasmic. A helical membrane pass occupies residues 240 to 260 (VLVFLLFGLPYGIYWFLLVWI). Residues 261-275 (EKFYYVLPCSIYPVT) lie on the Extracellular side of the membrane. A helical transmembrane segment spans residues 276 to 296 (VFLSCVNSSAKPIIYCLVGSI). Residues 297–347 (RHHRFQRKTLKLFLQRAMQDTPEEEECGEMGSSGRSREIKTIWKGLRAALI) lie on the Cytoplasmic side of the membrane.

It belongs to the G-protein coupled receptor 1 family. Mas subfamily.

Its subcellular location is the cell membrane. Functionally, orphan receptor. Probably involved in the function of nociceptive neurons. May regulate nociceptor function and/or development, including the sensation or modulation of pain. The protein is Mas-related G-protein coupled receptor member X2 (Mrgprx2) of Mus musculus (Mouse).